The chain runs to 282 residues: S-formylglutathione hydrolase (282 aa).

At Ala2 the chain carries N-acetylalanine. N6-succinyllysine is present on Lys4. Residues Ser149, Asp226, and His260 each act as charge relay system in the active site.

This sequence belongs to the esterase D family. In terms of assembly, homodimer.

The protein resides in the cytoplasm. It localises to the cytoplasmic vesicle. The catalysed reaction is S-formylglutathione + H2O = formate + glutathione + H(+). Serine hydrolase involved in the detoxification of formaldehyde. This chain is S-formylglutathione hydrolase (ESD), found in Bos taurus (Bovine).